Reading from the N-terminus, the 745-residue chain is Junction plakoglobin (745 aa).

An N-acetylmethionine modification is found at Met1. Residue Thr14 is glycosylated (O-linked (GlcNAc) threonine). 2 positions are modified to phosphoserine: Ser99 and Ser125. ARM repeat units follow at residues 132 to 171 (NYQD…QLSK), 172 to 215 (KEAS…LSHH), 216 to 255 (REGL…NLLL), 258 to 297 (EGAK…LLAY), 298 to 341 (GNQE…LSVC), 342 to 381 (PSNK…NLSD), 383 to 420 (ATKQ…NLTC), 423 to 464 (SKNK…HLTS), 470 to 510 (EMAQ…NLAL), 512 to 551 (PANH…QPYT), 574 to 613 (PMNR…ELAQ), and 615 to 661 (KEAA…PDYR). The interval 132–297 (NYQDDAELAT…TTDCLQLLAY (166 aa)) is interaction with DSC1 and DSG1. Phosphoserine is present on Ser182. The interval 574–661 (PMNRMEIFRL…ISEDKNPDYR (88 aa)) is interaction with DSC1. Phosphoserine occurs at positions 665 and 730.

This sequence belongs to the beta-catenin family. In terms of assembly, homodimer. Component of an E-cadherin/catenin adhesion complex composed of at least E-cadherin/CDH1 and gamma-catenin/JUP, and possibly alpha-catenin/CTNNA1; the complex is located to adherens junctions. The stable association of CTNNA1 is controversial as CTNNA1 was shown not to bind to F-actin when assembled in the complex. Interacts with MUC1. Interacts with CAV1. Interacts with PTPRJ. Interacts with DSG1. Interacts with DSC1 and DSC2. Interacts with PKP2. Interacts with PKP3 (via N-terminus); the interaction is required for PKP3 localization to desmosome cell-cell junctions. Interacts with DSG4. In terms of processing, may be phosphorylated by FER. In terms of tissue distribution, expressed in the heart (at protein level).

It localises to the cell junction. The protein resides in the adherens junction. Its subcellular location is the desmosome. It is found in the cytoplasm. The protein localises to the cytoskeleton. It localises to the cell membrane. The protein resides in the nucleus. Common junctional plaque protein. The membrane-associated plaques are architectural elements in an important strategic position to influence the arrangement and function of both the cytoskeleton and the cells within the tissue. The presence of plakoglobin in both the desmosomes and in the intermediate junctions suggests that it plays a central role in the structure and function of submembranous plaques. Acts as a substrate for VE-PTP and is required by it to stimulate VE-cadherin function in endothelial cells. Can replace beta-catenin in E-cadherin/catenin adhesion complexes which are proposed to couple cadherins to the actin cytoskeleton. This Rattus norvegicus (Rat) protein is Junction plakoglobin.